Consider the following 302-residue polypeptide: Flavin-dependent thymidylate synthase (302 aa).

A ThyX domain is found at 43–257 (GFVRVIDYMG…PFAYKAFEDY (215 aa)). FAD contacts are provided by residues threonine 89, 112–114 (RHR), and glutamate 120. DUMP is bound by residues 109-112 (QWIR), 120-124 (EYSAR), and arginine 196. A ThyX motif motif is present at residues 112 to 122 (RHRTANVNEYS). FAD contacts are provided by residues 212–214 (DLH) and histidine 218. DUMP is bound at residue arginine 223. Arginine 223 acts as the Involved in ionization of N3 of dUMP, leading to its activation in catalysis.

This sequence belongs to the thymidylate synthase ThyX family. Homotetramer. The cofactor is FAD.

It carries out the reaction dUMP + (6R)-5,10-methylene-5,6,7,8-tetrahydrofolate + NADPH + H(+) = dTMP + (6S)-5,6,7,8-tetrahydrofolate + NADP(+). It participates in pyrimidine metabolism; dTTP biosynthesis. Its function is as follows. Catalyzes the reductive methylation of 2'-deoxyuridine-5'-monophosphate (dUMP) to 2'-deoxythymidine-5'-monophosphate (dTMP) while utilizing 5,10-methylenetetrahydrofolate (mTHF) as the methyl donor, and NADPH and FADH(2) as the reductant. This chain is Flavin-dependent thymidylate synthase, found in Ruegeria pomeroyi (strain ATCC 700808 / DSM 15171 / DSS-3) (Silicibacter pomeroyi).